A 123-amino-acid polypeptide reads, in one-letter code: Large ribosomal subunit protein uL29 (123 aa).

Belongs to the universal ribosomal protein uL29 family.

The sequence is that of Large ribosomal subunit protein uL29 (RPL35) from Theileria parva (East coast fever infection agent).